Reading from the N-terminus, the 51-residue chain is Insulin (51 aa).

3 disulfide bridges follow: Cys7–Cys37, Cys19–Cys50, and Cys36–Cys41.

This sequence belongs to the insulin family. In terms of assembly, heterodimer of a B chain and an A chain linked by two disulfide bonds.

The protein localises to the secreted. In terms of biological role, insulin decreases blood glucose concentration. It increases cell permeability to monosaccharides, amino acids and fatty acids. It accelerates glycolysis, the pentose phosphate cycle, and glycogen synthesis in liver. The chain is Insulin (INS) from Meleagris gallopavo (Wild turkey).